The chain runs to 148 residues: Troponin C (148 aa).

EF-hand domains are found at residues 8 to 43, 44 to 79, 81 to 116, and 117 to 148; these read KQFN…LALH, VSDD…KVQE, EDER…LGDD, and LNDD…LMLG. 5 residues coordinate Ca(2+): aspartate 130, aspartate 132, serine 134, threonine 136, and glutamate 141.

This sequence belongs to the troponin C family.

Functionally, troponin is the central regulatory protein of striated muscle contraction. Tn consists of three components: Tn-I which is the inhibitor of actomyosin ATPase, Tn-T which contains the binding site for tropomyosin and Tn-C. The binding of calcium to Tn-C abolishes the inhibitory action of Tn on actin filaments. In Todarodes pacificus (Japanese flying squid), this protein is Troponin C.